The sequence spans 380 residues: Cytochrome b (380 aa).

4 helical membrane passes run 33–53 (FGSL…FLAM), 77–98 (WLIR…YLHV), 113–133 (WNIG…GYVL), and 178–198 (FFAF…LHLL). Heme b is bound by residues histidine 83 and histidine 97. 2 residues coordinate heme b: histidine 182 and histidine 196. Histidine 201 provides a ligand contact to a ubiquinone. 4 helical membrane passes run 226 to 246 (YKDI…ALFS), 288 to 308 (LGGV…PILH), 320 to 340 (FSQF…WIGG), and 347 to 367 (FIII…LLIP).

It belongs to the cytochrome b family. The cytochrome bc1 complex contains 3 respiratory subunits (MT-CYB, CYC1 and UQCRFS1), 2 core proteins (UQCRC1 and UQCRC2) and probably 6 low-molecular weight proteins. Heme b is required as a cofactor.

The protein resides in the mitochondrion inner membrane. In terms of biological role, component of the ubiquinol-cytochrome c reductase complex (complex III or cytochrome b-c1 complex) that is part of the mitochondrial respiratory chain. The b-c1 complex mediates electron transfer from ubiquinol to cytochrome c. Contributes to the generation of a proton gradient across the mitochondrial membrane that is then used for ATP synthesis. The polypeptide is Cytochrome b (mt-cyb) (Arapaima gigas (Arapaima)).